Consider the following 142-residue polypeptide: Hemoglobin subunit alpha-3 (142 aa).

In terms of domain architecture, Globin spans 2-142; the sequence is VLSAADKSNV…VSTVLTSKYR (141 aa). His-59 is an O2 binding site. Heme b is bound at residue His-88.

This sequence belongs to the globin family. Heterotetramer of two alpha chains and two beta chains. Red blood cells.

Involved in oxygen transport from the lung to the various peripheral tissues. This is Hemoglobin subunit alpha-3 from Bubalus bubalis (Domestic water buffalo).